The chain runs to 429 residues: Phosphoglucosamine mutase (429 aa).

The Phosphoserine intermediate role is filled by Ser-96. Positions 96, 230, 232, and 234 each coordinate Mg(2+). The residue at position 96 (Ser-96) is a Phosphoserine.

This sequence belongs to the phosphohexose mutase family. The cofactor is Mg(2+). Post-translationally, activated by phosphorylation.

The catalysed reaction is alpha-D-glucosamine 1-phosphate = D-glucosamine 6-phosphate. Catalyzes the conversion of glucosamine-6-phosphate to glucosamine-1-phosphate. The chain is Phosphoglucosamine mutase from Thermotoga maritima (strain ATCC 43589 / DSM 3109 / JCM 10099 / NBRC 100826 / MSB8).